The chain runs to 426 residues: 4-hydroxy-3-methylbut-2-en-1-yl diphosphate synthase (flavodoxin) (426 aa).

The disordered stretch occupies residues 1–20 (MLDRDLTLSDDAYESSPVSR). 4 residues coordinate [4Fe-4S] cluster: Cys320, Cys323, Cys366, and Glu373.

This sequence belongs to the IspG family. It depends on [4Fe-4S] cluster as a cofactor.

It catalyses the reaction (2E)-4-hydroxy-3-methylbut-2-enyl diphosphate + oxidized [flavodoxin] + H2O + 2 H(+) = 2-C-methyl-D-erythritol 2,4-cyclic diphosphate + reduced [flavodoxin]. It functions in the pathway isoprenoid biosynthesis; isopentenyl diphosphate biosynthesis via DXP pathway; isopentenyl diphosphate from 1-deoxy-D-xylulose 5-phosphate: step 5/6. Functionally, converts 2C-methyl-D-erythritol 2,4-cyclodiphosphate (ME-2,4cPP) into 1-hydroxy-2-methyl-2-(E)-butenyl 4-diphosphate. The sequence is that of 4-hydroxy-3-methylbut-2-en-1-yl diphosphate synthase (flavodoxin) from Wolbachia pipientis subsp. Culex pipiens (strain wPip).